Here is a 269-residue protein sequence, read N- to C-terminus: D-aminoacyl-tRNA deacylase (269 aa).

The protein belongs to the DtdA deacylase family. Monomer. Zn(2+) is required as a cofactor.

The catalysed reaction is a D-aminoacyl-tRNA + H2O = a tRNA + a D-alpha-amino acid + H(+). The enzyme catalyses glycyl-tRNA(Ala) + H2O = tRNA(Ala) + glycine + H(+). D-aminoacyl-tRNA deacylase with broad substrate specificity. By recycling D-aminoacyl-tRNA to D-amino acids and free tRNA molecules, this enzyme counteracts the toxicity associated with the formation of D-aminoacyl-tRNA entities in vivo. The polypeptide is D-aminoacyl-tRNA deacylase (Caldivirga maquilingensis (strain ATCC 700844 / DSM 13496 / JCM 10307 / IC-167)).